A 66-amino-acid polypeptide reads, in one-letter code: Putative alpha-neurotoxin RjAa44 (66 aa).

Residues 1–60 enclose the LCN-type CS-alpha/beta domain; the sequence is KEGYPVDWGNCKYECMSDAYCKDLCADRKAKSGYCYKLNWSCYCEGLPDDSPIKTNGHCR. Intrachain disulfides connect Cys11–Cys59, Cys15–Cys35, Cys21–Cys42, and Cys25–Cys44.

The protein belongs to the long (4 C-C) scorpion toxin superfamily. Sodium channel inhibitor family. Alpha subfamily. As to expression, expressed by the venom gland.

The protein localises to the secreted. Alpha toxins bind voltage-independently at site-3 of sodium channels (Nav) and inhibit the inactivation of the activated channels, thereby blocking neuronal transmission. In Rhopalurus junceus (Caribbean blue scorpion), this protein is Putative alpha-neurotoxin RjAa44.